The chain runs to 543 residues: Efflux pump mokI (543 aa).

The next 13 helical transmembrane spans lie at 30-50 (LVVT…SIIV), 90-110 (LLTL…GSAL), 125-145 (AVAG…LASA), 153-173 (LLIG…PLLG), 185-205 (CFYI…AIHI), 233-253 (LLGF…LEWG), 261-281 (SSVI…FGFW), 307-327 (LFLG…PIYF), 340-360 (VYML…GAII), 364-384 (GYYI…AGLV), 394-416 (AAWV…TPII), 428-448 (ALGI…FLTL), and 509-529 (VGAS…GLIW).

The protein belongs to the major facilitator superfamily. TCR/Tet family.

It is found in the membrane. Its function is as follows. Efflux pump; part of the gene cluster that mediates the biosynthesis of monakolin K, also known as lovastatin, and which acts as a potent competitive inhibitor of HMG-CoA reductase. This chain is Efflux pump mokI, found in Monascus pilosus (Red mold).